A 1101-amino-acid polypeptide reads, in one-letter code: MATPSKKTSTPSPQPSKRALPRDPSSEVPSKRKNSAPQLPLLQSSGPFVEGSIVRISMENFLTYDICEVSPGPHLNMIVGANGTGKSSIVCAICLGLAGKPAFMGRADKVGFFVKRGCSRGMVEIELFRASGNLVITREIDVAKNQSFWFINKKSTTQKIVEEKVAALNIQVGNLCQFLPQDKVGEFAKLSKIELLEATEKSIGPPEMHKYHCELKNLREKEKQLETSCKEKTEYLQKMVQRNERYKQDVERFYERKRHLDLIEMLEAKRPWVEYENVRQEYEEVKLVRDRVKEEVRKLKEGQIPVTCRIEEMENERHNLEARIKEKATDIKEASQKCKQKQDVIERKDKHIEELQQALIVKQNEELDRQRRIGNTRKMIEDLQNELKTTENCENLQPQIDAITNDLRRIQDEKALCEGEIIDKRRERETLEKEKKSVDDHIVRFDNLMNQKEDKLRQRFRDTYDAVLWLRNNRDKFKQRVCEPIMLTINMKDNKNAKYIENHIPSNDLRAFVFESQEDMEVFLKEVRDNKKLRVNAVIAPKSSYADKAPSRSLNELKQYGFFSYLRELFDAPDPVMSYLCCQYHIHEVPVGTEKTRERIERVIQETRLKQIYTAEEKYVVKTSFYSNKVISSNTSLKVAQFLTVTVDLEQRRHLEEQLKEIHRKLQAVDSGLIALRETSKHLEHKDNELRQKKKELLERKTKKRQLEQKISSKLGSLKLMEQDTCNLEEEERKASTKIKEINVQKAKLVTELTNLIKICTSLHIQKVDLILQNTTVISEKNKLESDYMAASSQLRLTEQHFIELDENRQRLLQKCKELMKRARQVCNLGAEQTLPQEYQTQVPTIPNGHNSSLPMVFQDLPNTLDEIDALLTEERSRASCFTGLNPTIVQEYTKREEEIEQLTEELKGKKVELDQYRENISQVKERWLNPLKELVEKINEKFSNFFSSMQCAGEVDLHTENEEDYDKYGIRIRVKFRSSTQLHELTPHHQSGGERSVSTMLYLMALQELNRCPFRVVDEINQGMDPINERRVFEMVVNTACKENTSQYFFITPKLLQNLPYSEKMTVLFVYNGPHMLEPNTWNLKAFQRRRRRITFTQPS.

Residues 1–17 (MATPSKKTSTPSPQPSK) show a composition bias toward low complexity. A disordered region spans residues 1-43 (MATPSKKTSTPSPQPSKRALPRDPSSEVPSKRKNSAPQLPLLQ). Ser-25 and Ser-35 each carry phosphoserine. 80–87 (GANGTGKS) lines the ATP pocket. The stretch at 207–445 (EMHKYHCELK…KSVDDHIVRF (239 aa)) forms a coiled coil. The tract at residues 446 to 646 (DNLMNQKEDK…LKVAQFLTVT (201 aa)) is flexible hinge. 2 coiled-coil regions span residues 647–828 (VDLE…QVCN) and 888–927 (TIVQ…VKER).

Belongs to the SMC family. SMC5 subfamily. In terms of assembly, forms a heterodimer with SMC6. Component of the SMC5-SMC6 complex which consists at least of SMC5, SMC6, NSMCE2, NSMCE1, NSMCE4A or EID3 and NSMCE3. Interacts with NSMCE2. Interacts with SLF2; this interaction induces an association of the SLF1-SLF2 complex with the SMC5-SMC6 complex. Interacts with RAD18; this interaction is increased in a SLF1 or SLF2-dependent manner. (Microbial infection) SMC5-SMC6 complex interacts with Hepatitis B X protein. As to quaternary structure, (Microbial infection) Interacts with human herpesvirus 8 (KSHV) protein RTA/ORF50; this interaction targets the SMC5-SMC6 complex for proteasomal degradation. Sumoylated. In terms of processing, ubiquitinated. Post-translationally, (Microbial infection) SMC5-SMC6 complex is degraded by the activity of Hepatitis B X protein. In terms of tissue distribution, widely expressed. Strongly expressed in testis.

It localises to the nucleus. Its subcellular location is the chromosome. The protein resides in the PML body. It is found in the telomere. Functionally, core component of the SMC5-SMC6 complex, a complex involved in repair of DNA double-strand breaks by homologous recombination. The complex may promote sister chromatid homologous recombination by recruiting the SMC1-SMC3 cohesin complex to double-strand breaks. The complex is required for telomere maintenance via recombination in ALT (alternative lengthening of telomeres) cell lines and mediates sumoylation of shelterin complex (telosome) components which is proposed to lead to shelterin complex disassembly in ALT-associated PML bodies (APBs). Required for recruitment of telomeres to PML nuclear bodies. Required for sister chromatid cohesion during prometaphase and mitotic progression; the function seems to be independent of SMC6. SMC5-SMC6 complex may prevent transcription of episomal DNA, such as circular viral DNA genome. The chain is Structural maintenance of chromosomes protein 5 (SMC5) from Homo sapiens (Human).